We begin with the raw amino-acid sequence, 392 residues long: uncharacterized protein (392 aa).

Belongs to the chlamydial CPn_0675/CT_696/TC_0068 family.

This is an uncharacterized protein from Chlamydia muridarum (strain MoPn / Nigg).